We begin with the raw amino-acid sequence, 431 residues long: Gamma-glutamyl phosphate reductase (431 aa).

It belongs to the gamma-glutamyl phosphate reductase family.

The protein localises to the cytoplasm. The enzyme catalyses L-glutamate 5-semialdehyde + phosphate + NADP(+) = L-glutamyl 5-phosphate + NADPH + H(+). It participates in amino-acid biosynthesis; L-proline biosynthesis; L-glutamate 5-semialdehyde from L-glutamate: step 2/2. Catalyzes the NADPH-dependent reduction of L-glutamate 5-phosphate into L-glutamate 5-semialdehyde and phosphate. The product spontaneously undergoes cyclization to form 1-pyrroline-5-carboxylate. This is Gamma-glutamyl phosphate reductase from Synechococcus elongatus (strain ATCC 33912 / PCC 7942 / FACHB-805) (Anacystis nidulans R2).